Here is a 367-residue protein sequence, read N- to C-terminus: Dye-decolorizing peroxidase (367 aa).

Residue Asp152 is the Proton acceptor of the active site. His225 serves as a coordination point for heme. The disordered stretch occupies residues 311–367 (DPDGELAAAEPSDAQNDDPASASARIEETDPPNPASADDPAPADDSLGIGSLRRRDQ). The segment covering 345-356 (ASADDPAPADDS) has biased composition (low complexity). Residues 358–365 (GIGSLRRR) form a targeting peptide region.

The protein belongs to the DyP-type peroxidase family. As to quaternary structure, homohexamer. The cofactor is heme b.

The protein localises to the encapsulin nanocompartment. Its function is as follows. Cargo protein of a type 1 encapsulin nanocompartment. Has both general peroxidase activity and dye-decolorizing activity. Can catalyze the oxidation of both protoporphyrinogen IX and coproporphyrinogen III to their corresponding porphyrins. Also efficiently decolorizes the dyes alizarin red and Cibacron blue F3GA. This cargo-loaded encapsulin nanocompartment is probably involved in protection against oxidative damage. This Brevibacterium linens protein is Dye-decolorizing peroxidase.